The primary structure comprises 133 residues: Small ribosomal subunit protein uS11 (133 aa).

It belongs to the universal ribosomal protein uS11 family. In terms of assembly, part of the 30S ribosomal subunit. Interacts with proteins S7 and S18. Binds to IF-3.

Functionally, located on the platform of the 30S subunit, it bridges several disparate RNA helices of the 16S rRNA. Forms part of the Shine-Dalgarno cleft in the 70S ribosome. In Christiangramia forsetii (strain DSM 17595 / CGMCC 1.15422 / KT0803) (Gramella forsetii), this protein is Small ribosomal subunit protein uS11.